We begin with the raw amino-acid sequence, 429 residues long: MLDPNILRNELGAVAEKLARRGYTLDVDTLRKQEERRKVLQVETETLQAERNSRSKAIGAAKARGEDIDPLRQEVNQLGEKLDTAKAELEKLQAEIRDLALSIPNIPDDSVPVGKDENDNLEVSRWGEPGKYDFEIQDHVSLGELTNGLDFAAAVKLTGSRFVVMKGQIARLHRALAQFMLNLHTEQHGYLETYVPYLVNHETLYGTGQLPKFGEDLFHTKPLEEEAESHYALIPTAEVPITNLVRGDILDENELPLKMTAHTPCFRSEAGSYGRDTRGLIRMHQFDKVELVQIVHPDESMDALEALTGHAEKVLQLLNLPYRKVLLCTGDMGFSACKTYDLEVWLPAQNTYREISSCSNMWDFQARRMQARFRGKEDKKTQLLHTLNGSGLAVGRTLVAVMENYQQADGRIEIPEVLRPYMGGLEYIG.

Residue 236 to 238 (TAE) coordinates L-serine. 267-269 (RSE) lines the ATP pocket. Glutamate 290 provides a ligand contact to L-serine. 354-357 (EISS) is a binding site for ATP. Residue serine 390 participates in L-serine binding.

It belongs to the class-II aminoacyl-tRNA synthetase family. Type-1 seryl-tRNA synthetase subfamily. Homodimer. The tRNA molecule binds across the dimer.

It is found in the cytoplasm. It catalyses the reaction tRNA(Ser) + L-serine + ATP = L-seryl-tRNA(Ser) + AMP + diphosphate + H(+). The enzyme catalyses tRNA(Sec) + L-serine + ATP = L-seryl-tRNA(Sec) + AMP + diphosphate + H(+). The protein operates within aminoacyl-tRNA biosynthesis; selenocysteinyl-tRNA(Sec) biosynthesis; L-seryl-tRNA(Sec) from L-serine and tRNA(Sec): step 1/1. In terms of biological role, catalyzes the attachment of serine to tRNA(Ser). Is also able to aminoacylate tRNA(Sec) with serine, to form the misacylated tRNA L-seryl-tRNA(Sec), which will be further converted into selenocysteinyl-tRNA(Sec). This Photorhabdus laumondii subsp. laumondii (strain DSM 15139 / CIP 105565 / TT01) (Photorhabdus luminescens subsp. laumondii) protein is Serine--tRNA ligase.